A 432-amino-acid polypeptide reads, in one-letter code: Enolase (432 aa).

Gln163 serves as a coordination point for (2R)-2-phosphoglycerate. Glu205 (proton donor) is an active-site residue. Mg(2+) contacts are provided by Asp242, Glu289, and Asp316. Positions 341, 370, 371, and 392 each coordinate (2R)-2-phosphoglycerate. Lys341 serves as the catalytic Proton acceptor.

It belongs to the enolase family. Mg(2+) serves as cofactor. In terms of processing, probably phosphorylated.

It localises to the cytoplasm. Its subcellular location is the secreted. The protein resides in the cell surface. The enzyme catalyses (2R)-2-phosphoglycerate = phosphoenolpyruvate + H2O. The protein operates within carbohydrate degradation; glycolysis; pyruvate from D-glyceraldehyde 3-phosphate: step 4/5. Functionally, catalyzes the reversible conversion of 2-phosphoglycerate (2-PG) into phosphoenolpyruvate (PEP). It is essential for the degradation of carbohydrates via glycolysis. In terms of biological role, 'Moonlights' as a plasminogen receptor. Binds plasminogen and human salivary mucin MG2 when expressed on the bacterial cell surface, potentially allowing the bacterium to acquire surface-associated proteolytic activity that may help the dissemination through oral tissues and entrance into the blood stream. The protein is Enolase of Streptococcus mutans serotype c (strain ATCC 700610 / UA159).